Here is a 445-residue protein sequence, read N- to C-terminus: Chromosomal replication initiator protein DnaA (445 aa).

Residues 1-72 form a domain I, interacts with DnaA modulators region; it reads MSGIDTIWEK…QEAFIEEIGE (72 aa). The tract at residues 72 to 107 is domain II; that stretch reads EKLNIKVISSEDELMNNEKEAPVRKTQQTSQELLPN. Residues 108-324 form a domain III, AAA+ region region; sequence QLNTDNTFDT…GALTRVSAYS (217 aa). Positions 152, 154, 155, and 156 each coordinate ATP. Residues 325–445 form a domain IV, binds dsDNA region; it reads KLVNRELNSD…LKNIEKDITS (121 aa).

This sequence belongs to the DnaA family. In terms of assembly, oligomerizes as a right-handed, spiral filament on DNA at oriC.

It localises to the cytoplasm. In terms of biological role, plays an essential role in the initiation and regulation of chromosomal replication. ATP-DnaA binds to the origin of replication (oriC) to initiate formation of the DNA replication initiation complex once per cell cycle. Binds the DnaA box (a 9 base pair repeat at the origin) and separates the double-stranded (ds)DNA. Forms a right-handed helical filament on oriC DNA; dsDNA binds to the exterior of the filament while single-stranded (ss)DNA is stabiized in the filament's interior. The ATP-DnaA-oriC complex binds and stabilizes one strand of the AT-rich DNA unwinding element (DUE), permitting loading of DNA polymerase. After initiation quickly degrades to an ADP-DnaA complex that is not apt for DNA replication. Binds acidic phospholipids. The polypeptide is Chromosomal replication initiator protein DnaA (Macrococcus caseolyticus (strain JCSC5402) (Macrococcoides caseolyticum)).